The primary structure comprises 123 residues: Histone H2B (123 aa).

The segment at 1-30 is disordered; that stretch reads MPPKTSGKAAKKAGKAQKNITKTDKKKKRR. N-methylproline; partial is present on P2. At K44 the chain carries N6-succinyllysine. Residue S110 is glycosylated (O-linked (GlcNAc) serine). 2 positions are modified to N6-succinyllysine: K114 and K118. A Glycyl lysine isopeptide (Lys-Gly) (interchain with G-Cter in ubiquitin) cross-link involves residue K118.

The protein belongs to the histone H2B family. The nucleosome is a histone octamer containing two molecules each of H2A, H2B, H3 and H4 assembled in one H3-H4 heterotetramer and two H2A-H2B heterodimers. The octamer wraps approximately 147 bp of DNA. Phosphorylated by the catalytic component of the Dbf4-dependent kinase (DDK) complex Cdc7. Post-translationally, monoubiquitination of Lys-118 by Bre1 gives a specific tag for epigenetic transcriptional activation and is also prerequisite for histone H3 'Lys-4' and 'Lys-79' methylation. Deubiquitination of Lys-118 by the SAGA complex is involved in activating transcription of a large subset of genes. In terms of processing, methylation at Pro-2 increases upon heat shock. GlcNAcylation at Ser-110 promotes monoubiquitination of Lys-118. It fluctuates in response to extracellular glucose, and associates with transcribed genes.

The protein localises to the nucleus. It localises to the chromosome. Core component of nucleosome. Nucleosomes wrap and compact DNA into chromatin, limiting DNA accessibility to the cellular machineries which require DNA as a template. Histones thereby play a central role in transcription regulation, DNA repair, DNA replication and chromosomal stability. DNA accessibility is regulated via a complex set of post-translational modifications of histones, also called histone code, and nucleosome remodeling. In Drosophila yakuba (Fruit fly), this protein is Histone H2B (His2B).